We begin with the raw amino-acid sequence, 926 residues long: Nitrate reductase [NADH] (926 aa).

Residues 1-85 (MAASVDRQYH…SDSEEDDDEN (85 aa)) are disordered. Residues 36–46 (YTFSNPPSSNG) are compositionally biased toward polar residues. Positions 58–73 (DNNSNSNNGSNNNNNR) are enriched in low complexity. C204 is a binding site for Mo-molybdopterin. In terms of domain architecture, Cytochrome b5 heme-binding spans 551–626 (SKMYSMSEVK…LEDFRIGELI (76 aa)). Positions 586 and 609 each coordinate heme. Residues 670–782 (RVKIPCKLIE…KGPLGHIEYL (113 aa)) form the FAD-binding FR-type domain. FAD is bound by residues 722–725 (RAYT), 739–743 (VVKVY), F744, F751, 756–758 (VMS), and T809.

The protein belongs to the nitrate reductase family. In terms of assembly, homodimer. Requires FAD as cofactor. Heme is required as a cofactor. It depends on Mo-molybdopterin as a cofactor.

The catalysed reaction is nitrite + NAD(+) + H2O = nitrate + NADH + H(+). Its function is as follows. Nitrate reductase is a key enzyme involved in the first step of nitrate assimilation in plants, fungi and bacteria. In Spinacia oleracea (Spinach), this protein is Nitrate reductase [NADH] (NIA).